The following is a 238-amino-acid chain: Probable phosphatase phospho2 (238 aa).

Residue Asp-8 is the Nucleophile of the active site. Positions 8 and 10 each coordinate Mg(2+). The active-site Proton donor is the Asp-10. Asp-19 and Asp-99 together coordinate substrate. Position 179 (Asp-179) interacts with Mg(2+).

Belongs to the HAD-like hydrolase superfamily. PHOSPHO family. It depends on Mg(2+) as a cofactor.

Functionally, probable phosphatase. In Xenopus tropicalis (Western clawed frog), this protein is Probable phosphatase phospho2 (phospho2).